Here is a 453-residue protein sequence, read N- to C-terminus: Retroviral integration site protein Fli-1 homolog (453 aa).

The PNT domain maps to 111 to 197 (PPPPNMTTNE…SHLNYLRDSS (87 aa)). Polar residues predominate over residues 201 to 214 (GYNTQAHTDQSSRL). The tract at residues 201–273 (GYNTQAHTDQ…YQILGPTSSR (73 aa)) is disordered. Residues 215-226 (TAKEDPSYEAVR) show a composition bias toward basic and acidic residues. 2 stretches are compositionally biased toward polar residues: residues 230 to 239 (WGNSMSSPVT) and 246 to 273 (GTQN…TSSR). The segment at residues 282-362 (IQLWQFLLEL…HGKRYAYKFD (81 aa)) is a DNA-binding region (ETS).

The protein belongs to the ETS family.

The protein resides in the nucleus. This chain is Retroviral integration site protein Fli-1 homolog (fli1), found in Xenopus laevis (African clawed frog).